The chain runs to 25 residues: Large ribosomal subunit protein uL29 (25 aa).

It belongs to the universal ribosomal protein uL29 family.

The polypeptide is Large ribosomal subunit protein uL29 (rpmC) (Brevundimonas vesicularis (Pseudomonas vesicularis)).